The following is a 164-amino-acid chain: SsrA-binding protein (164 aa).

Residues 141-164 (KLHDKRQDEKQKSIKKEINSALKR) are disordered. Over residues 145 to 158 (KRQDEKQKSIKKEI) the composition is skewed to basic and acidic residues.

This sequence belongs to the SmpB family.

It localises to the cytoplasm. Required for rescue of stalled ribosomes mediated by trans-translation. Binds to transfer-messenger RNA (tmRNA), required for stable association of tmRNA with ribosomes. tmRNA and SmpB together mimic tRNA shape, replacing the anticodon stem-loop with SmpB. tmRNA is encoded by the ssrA gene; the 2 termini fold to resemble tRNA(Ala) and it encodes a 'tag peptide', a short internal open reading frame. During trans-translation Ala-aminoacylated tmRNA acts like a tRNA, entering the A-site of stalled ribosomes, displacing the stalled mRNA. The ribosome then switches to translate the ORF on the tmRNA; the nascent peptide is terminated with the 'tag peptide' encoded by the tmRNA and targeted for degradation. The ribosome is freed to recommence translation, which seems to be the essential function of trans-translation. In Prochlorococcus marinus (strain AS9601), this protein is SsrA-binding protein.